The chain runs to 512 residues: MVNIRPDEISSIIRKQIEQYNQEVKVVNIGTVLQVGDGIARIYGLDKVMAGELLEFEDGTVGIALNLESDNVGAVLMGDGLNIQEGSSVKATGKIAQIPVSDGYLGRVVNALGRPIDGKGDIPASEYRLIESPAPGIISRRSVYEPMQTGLIAIDAMIPIGRGQRELIIGDRQTGKTAVATDTILNQKGQNVICVYVAIGQKASSIAQVLNTFEERGAMDYTIIVAETADAPATLQYLAPYTGAAIAEYFMYRGKHTLVIYDDLSKQAQAYRQMSLLLRRPPGREAYPGDVFYLHSRLLERAAKLSSQLGEGSMTALPIVETQAGDVSAYIPTNVISITDGQIFLSADLFNAGIRPAINVGISVSRVGSAAQIKAMKQVAGKLKLELAQFAELEAFSQFASDLDKATQNQLARGQRLRELLKQSQAAPLAVEEQVATIYTGVNGYLDVIEVAQVRRFLTELRQYLGTNKPKFGEIIREKKAVTEEAESLLKAAIKEHTEAFLLQEESVGSRS.

Residue 170-177 (GDRQTGKT) participates in ATP binding.

The protein belongs to the ATPase alpha/beta chains family. In terms of assembly, F-type ATPases have 2 components, CF(1) - the catalytic core - and CF(0) - the membrane proton channel. CF(1) has five subunits: alpha(3), beta(3), gamma(1), delta(1), epsilon(1). CF(0) has four main subunits: a, b, b' and c.

It localises to the plastid. The protein resides in the chloroplast thylakoid membrane. It carries out the reaction ATP + H2O + 4 H(+)(in) = ADP + phosphate + 5 H(+)(out). Produces ATP from ADP in the presence of a proton gradient across the membrane. The alpha chain is a regulatory subunit. The sequence is that of ATP synthase subunit alpha, chloroplastic from Staurastrum punctulatum (Green alga).